The following is a 58-amino-acid chain: MLGWAITFFIIAIIAAVFGFGGIAGAATGIAQFLFFVFIALLVISLIANALRGRAPKA.

2 helical membrane-spanning segments follow: residues 4 to 24 (WAIT…GGIA) and 27 to 47 (ATGI…ISLI).

The protein belongs to the UPF0391 family.

The protein resides in the cell membrane. This Alteromonas mediterranea (strain DSM 17117 / CIP 110805 / LMG 28347 / Deep ecotype) protein is UPF0391 membrane protein MADE_1011595.